Here is a 944-residue protein sequence, read N- to C-terminus: Isoleucine--tRNA ligase (944 aa).

The 'HIGH' region signature appears at 58-68; the sequence is PYANGDIHIGH. Glu-568 contributes to the L-isoleucyl-5'-AMP binding site. The short motif at 609 to 613 is the 'KMSKS' region element; it reads KMSKS. Residue Lys-612 participates in ATP binding. Positions 907, 910, 927, and 930 each coordinate Zn(2+).

This sequence belongs to the class-I aminoacyl-tRNA synthetase family. IleS type 1 subfamily. Monomer. It depends on Zn(2+) as a cofactor.

It localises to the cytoplasm. It catalyses the reaction tRNA(Ile) + L-isoleucine + ATP = L-isoleucyl-tRNA(Ile) + AMP + diphosphate. Catalyzes the attachment of isoleucine to tRNA(Ile). As IleRS can inadvertently accommodate and process structurally similar amino acids such as valine, to avoid such errors it has two additional distinct tRNA(Ile)-dependent editing activities. One activity is designated as 'pretransfer' editing and involves the hydrolysis of activated Val-AMP. The other activity is designated 'posttransfer' editing and involves deacylation of mischarged Val-tRNA(Ile). This Psychromonas ingrahamii (strain DSM 17664 / CCUG 51855 / 37) protein is Isoleucine--tRNA ligase.